Consider the following 346-residue polypeptide: Phosphoribosylformylglycinamidine cyclo-ligase (346 aa).

The protein belongs to the AIR synthase family.

The protein resides in the cytoplasm. The enzyme catalyses 2-formamido-N(1)-(5-O-phospho-beta-D-ribosyl)acetamidine + ATP = 5-amino-1-(5-phospho-beta-D-ribosyl)imidazole + ADP + phosphate + H(+). The protein operates within purine metabolism; IMP biosynthesis via de novo pathway; 5-amino-1-(5-phospho-D-ribosyl)imidazole from N(2)-formyl-N(1)-(5-phospho-D-ribosyl)glycinamide: step 2/2. This Prochlorococcus marinus (strain NATL1A) protein is Phosphoribosylformylglycinamidine cyclo-ligase.